The following is a 65-amino-acid chain: Oxiana weak toxin (65 aa).

Intrachain disulfides connect Cys3-Cys24, Cys6-Cys11, Cys17-Cys42, Cys46-Cys57, and Cys58-Cys63.

This sequence belongs to the three-finger toxin family. Ancestral subfamily. Orphan group II sub-subfamily. As to expression, expressed by the venom gland.

Its subcellular location is the secreted. Binds to muscle and neuronal nicotinic acetylcholine receptors (nAChR). It binds to extracellular domain of rat alpha-7/CHRNA7 nAChR (IC(50)=2.2 uM) and to Torpedo californica membranes (IC(50)=30 uM). The chain is Oxiana weak toxin from Naja oxiana (Central Asian cobra).